A 198-amino-acid chain; its full sequence is Cell division protein SepF (198 aa).

The disordered stretch occupies residues 170–198; the sequence is EVPQPPARPARPASTNPPAWGNETNRMAQ. Residues 179–188 are compositionally biased toward low complexity; it reads ARPASTNPPA.

The protein belongs to the SepF family. Homodimer. Interacts with FtsZ.

It is found in the cytoplasm. Cell division protein that is part of the divisome complex and is recruited early to the Z-ring. Probably stimulates Z-ring formation, perhaps through the cross-linking of FtsZ protofilaments. Its function overlaps with FtsA. This is Cell division protein SepF from Trichormus variabilis (strain ATCC 29413 / PCC 7937) (Anabaena variabilis).